Consider the following 489-residue polypeptide: Glutamate--tRNA ligase (489 aa).

Residues 11 to 21 carry the 'HIGH' region motif; it reads PSPTGHLHIGG. Residues 253 to 257 carry the 'KMSKS' region motif; the sequence is KLSKR. Lys256 provides a ligand contact to ATP.

The protein belongs to the class-I aminoacyl-tRNA synthetase family. Glutamate--tRNA ligase type 1 subfamily. In terms of assembly, monomer.

Its subcellular location is the cytoplasm. The enzyme catalyses tRNA(Glu) + L-glutamate + ATP = L-glutamyl-tRNA(Glu) + AMP + diphosphate. Functionally, catalyzes the attachment of glutamate to tRNA(Glu) in a two-step reaction: glutamate is first activated by ATP to form Glu-AMP and then transferred to the acceptor end of tRNA(Glu). The chain is Glutamate--tRNA ligase from Geobacillus stearothermophilus (Bacillus stearothermophilus).